A 561-amino-acid polypeptide reads, in one-letter code: DISARM protein DrmB (561 aa).

It is found in the cytoplasm. Component of antiviral defense system DISARM (defense island system associated with restriction-modification), composed of DrmE, DrmA, DrmB, DrmC and DrmMII. DISARM is probably a multi-gene restriction module, this subunit has an unknown function. Expression of DISARM in B.subtilis (strain BEST7003) confers resistance to phages Nf, phi29, phi105, phi3T, SPO1, SPR and SPP1. Protection is over 10(7)-fold against phi3T, 10(4)-10(5)-fold against Nf, phi29, phi105 and SPR, 100-fold against SPO1 and 10-fold against SPP1. DISARM does not interfere with phage adsorption, but instead interferes with (phi3T) DNA replication early in its cycle, preventing replication, circularization and lysogeny and probably causes phage DNA degradation (DNA is degraded in SPP1-infected cells). This Bacillus paralicheniformis (strain ATCC 9945a / NCIMB 11709 / CD-2) protein is DISARM protein DrmB.